Consider the following 282-residue polypeptide: ATP synthase gamma chain (282 aa).

This sequence belongs to the ATPase gamma chain family. F-type ATPases have 2 components, CF(1) - the catalytic core - and CF(0) - the membrane proton channel. CF(1) has five subunits: alpha(3), beta(3), gamma(1), delta(1), epsilon(1). CF(0) has three main subunits: a, b and c.

The protein localises to the cell membrane. In terms of biological role, produces ATP from ADP in the presence of a proton gradient across the membrane. The gamma chain is believed to be important in regulating ATPase activity and the flow of protons through the CF(0) complex. The polypeptide is ATP synthase gamma chain (Clostridium botulinum (strain Langeland / NCTC 10281 / Type F)).